The following is an 892-amino-acid chain: DNA mismatch repair protein MutS (892 aa).

607–614 (GPNMSGKS) provides a ligand contact to ATP. A disordered region spans residues 833–855 (EESQLSFFGAEQSSKKQDKPALD). The span at 845–855 (SSKKQDKPALD) shows a compositional bias: basic and acidic residues.

This sequence belongs to the DNA mismatch repair MutS family.

In terms of biological role, this protein is involved in the repair of mismatches in DNA. It is possible that it carries out the mismatch recognition step. This protein has a weak ATPase activity. The protein is DNA mismatch repair protein MutS of Bacillus anthracis (strain A0248).